Consider the following 296-residue polypeptide: 4-hydroxybenzoate octaprenyltransferase (296 aa).

Helical transmembrane passes span 29-49 (IGIY…ADGV), 55-75 (LLIF…INDF), 102-122 (AWIT…LTNA), 146-166 (YYPQ…AFTA), 169-189 (GELP…TVAY), 219-239 (LIIG…GSRF), 241-261 (LGLY…WEAW), and 275-295 (FLHN…DYAL).

It belongs to the UbiA prenyltransferase family. Requires Mg(2+) as cofactor.

The protein resides in the cell inner membrane. The catalysed reaction is all-trans-octaprenyl diphosphate + 4-hydroxybenzoate = 4-hydroxy-3-(all-trans-octaprenyl)benzoate + diphosphate. The protein operates within cofactor biosynthesis; ubiquinone biosynthesis. Catalyzes the prenylation of para-hydroxybenzoate (PHB) with an all-trans polyprenyl group. Mediates the second step in the final reaction sequence of ubiquinone-8 (UQ-8) biosynthesis, which is the condensation of the polyisoprenoid side chain with PHB, generating the first membrane-bound Q intermediate 3-octaprenyl-4-hydroxybenzoate. The sequence is that of 4-hydroxybenzoate octaprenyltransferase from Pseudomonas aeruginosa (strain UCBPP-PA14).